The primary structure comprises 233 residues: 7-cyano-7-deazaguanine synthase (233 aa).

8–18 (FSGGQDSTTCL) lines the ATP pocket. The Zn(2+) site is built by cysteine 188, cysteine 197, cysteine 200, and cysteine 203.

Belongs to the QueC family. It depends on Zn(2+) as a cofactor.

The enzyme catalyses 7-carboxy-7-deazaguanine + NH4(+) + ATP = 7-cyano-7-deazaguanine + ADP + phosphate + H2O + H(+). Its pathway is purine metabolism; 7-cyano-7-deazaguanine biosynthesis. Functionally, catalyzes the ATP-dependent conversion of 7-carboxy-7-deazaguanine (CDG) to 7-cyano-7-deazaguanine (preQ(0)). This is 7-cyano-7-deazaguanine synthase from Klebsiella pneumoniae (strain 342).